A 612-amino-acid polypeptide reads, in one-letter code: Alpha-glycerophosphate oxidase (612 aa).

Asp-21 to Glu-49 serves as a coordination point for FAD. Basic and acidic residues predominate over residues Val-398–Asp-408. The tract at residues Val-398–Phe-418 is disordered.

This sequence belongs to the FAD-dependent glycerol-3-phosphate dehydrogenase family. It depends on FAD as a cofactor.

The protein resides in the cytoplasm. The catalysed reaction is sn-glycerol 3-phosphate + O2 = dihydroxyacetone phosphate + H2O2. This is Alpha-glycerophosphate oxidase (glpO) from Streptococcus pyogenes serotype M3 (strain ATCC BAA-595 / MGAS315).